Consider the following 404-residue polypeptide: Cysteine desulfurase IscS (404 aa).

Residues 75–76 (AT), Asn-155, Gln-183, and 203–205 (SGH) contribute to the pyridoxal 5'-phosphate site. An N6-(pyridoxal phosphate)lysine modification is found at Lys-206. Thr-243 lines the pyridoxal 5'-phosphate pocket. The Cysteine persulfide intermediate role is filled by Cys-328. Cys-328 contacts [2Fe-2S] cluster.

Belongs to the class-V pyridoxal-phosphate-dependent aminotransferase family. NifS/IscS subfamily. In terms of assembly, homodimer. Forms a heterotetramer with IscU, interacts with other sulfur acceptors. Pyridoxal 5'-phosphate serves as cofactor.

It is found in the cytoplasm. It carries out the reaction (sulfur carrier)-H + L-cysteine = (sulfur carrier)-SH + L-alanine. It functions in the pathway cofactor biosynthesis; iron-sulfur cluster biosynthesis. Master enzyme that delivers sulfur to a number of partners involved in Fe-S cluster assembly, tRNA modification or cofactor biosynthesis. Catalyzes the removal of elemental sulfur atoms from cysteine to produce alanine. Functions as a sulfur delivery protein for Fe-S cluster synthesis onto IscU, an Fe-S scaffold assembly protein, as well as other S acceptor proteins. The chain is Cysteine desulfurase IscS from Shewanella denitrificans (strain OS217 / ATCC BAA-1090 / DSM 15013).